We begin with the raw amino-acid sequence, 245 residues long: tRNA pseudouridine synthase A (245 aa).

D52 (nucleophile) is an active-site residue. Y110 provides a ligand contact to substrate.

This sequence belongs to the tRNA pseudouridine synthase TruA family. Homodimer.

The catalysed reaction is uridine(38/39/40) in tRNA = pseudouridine(38/39/40) in tRNA. Formation of pseudouridine at positions 38, 39 and 40 in the anticodon stem and loop of transfer RNAs. In Borrelia turicatae (strain 91E135), this protein is tRNA pseudouridine synthase A.